A 428-amino-acid polypeptide reads, in one-letter code: Histidine--tRNA ligase (428 aa).

It belongs to the class-II aminoacyl-tRNA synthetase family. As to quaternary structure, homodimer.

The protein localises to the cytoplasm. It carries out the reaction tRNA(His) + L-histidine + ATP = L-histidyl-tRNA(His) + AMP + diphosphate + H(+). The sequence is that of Histidine--tRNA ligase from Chromohalobacter salexigens (strain ATCC BAA-138 / DSM 3043 / CIP 106854 / NCIMB 13768 / 1H11).